The chain runs to 439 residues: MRLATDQLGRPPQRVAVLSVHTSPLAQPGTGDAGGMNVYVLQSALHMARRGVEVEIFTRATTSADPPVVRVAPGVLVRNVVAGPFEGLDKYDLPTQLCAFTAGVLRAEATHEPGYYDIVHSHYWLSGQVGWLARDRWAVPLVHTAHTLAAVKNAALAEGDSPEPPLRAVGEQQVVDEADRLIVNTELEAEQLVSLHNADPSRIDVVHPGVDLDTFTPGDRAAARAALGLDPRETVVAFVGRIQPLKAPDILLRAAAKLPDVRVLVAGGPSGSGLAAPDNLVALADELGISERVTFLPPQSREDLVRVYRAADLVAVPSYSESFGLVAVEAQACGTPVVAAAVGGLPVAVRDGVTGALVDGHDVGDWAHTIDSLLSRGPATMRRAAVEHAATFSWAHTVDDLLASYGRAISDYRDRHPHADETLSRRTARRFSRRRGVRA.

His-21 lines the 1D-myo-inositol 3-phosphate pocket. Residues 27–28 and Gly-35 contribute to the UDP-N-acetyl-alpha-D-glucosamine site; that span reads QP. Residues 32–37, Lys-90, Tyr-123, Thr-147, and Arg-167 each bind 1D-myo-inositol 3-phosphate; that span reads DAGGMN. Residues Arg-241, Lys-246, and Gln-299 each coordinate UDP-N-acetyl-alpha-D-glucosamine. Mg(2+)-binding residues include Tyr-308, Arg-309, and Ala-311. Positions 321 and 329 each coordinate UDP-N-acetyl-alpha-D-glucosamine. A Mg(2+)-binding site is contributed by Thr-335.

Belongs to the glycosyltransferase group 1 family. MshA subfamily. In terms of assembly, homodimer.

The enzyme catalyses 1D-myo-inositol 3-phosphate + UDP-N-acetyl-alpha-D-glucosamine = 1D-myo-inositol 2-acetamido-2-deoxy-alpha-D-glucopyranoside 3-phosphate + UDP + H(+). Catalyzes the transfer of a N-acetyl-glucosamine moiety to 1D-myo-inositol 3-phosphate to produce 1D-myo-inositol 2-acetamido-2-deoxy-glucopyranoside 3-phosphate in the mycothiol biosynthesis pathway. This is D-inositol 3-phosphate glycosyltransferase from Mycobacterium sp. (strain KMS).